The following is a 111-amino-acid chain: Probable 4-amino-4-deoxy-L-arabinose-phosphoundecaprenol flippase subunit ArnE (111 aa).

The Cytoplasmic segment spans residues 1–35 (MIWLTLVFASLLSVAGQLCQKQATCFVAISKRRKH). Residues 36-56 (IVLWLGLALACLGLAMVLWLL) form a helical membrane-spanning segment. Positions 40–109 (LGLALACLGL…IIGGIVILGS (70 aa)) constitute an EamA domain. Residues 57-60 (VLQN) are Periplasmic-facing. Residues 61 to 81 (VPVGIAYPMLSLNFVWVTLAA) form a helical membrane-spanning segment. At 82–87 (VKLWHE) the chain is on the cytoplasmic side. A helical membrane pass occupies residues 88–108 (PVSPRHWCGVAFIIGGIVILG). Over 109 to 111 (STV) the chain is Periplasmic.

It belongs to the ArnE family. As to quaternary structure, heterodimer of ArnE and ArnF.

The protein localises to the cell inner membrane. The protein operates within bacterial outer membrane biogenesis; lipopolysaccharide biosynthesis. Its function is as follows. Translocates 4-amino-4-deoxy-L-arabinose-phosphoundecaprenol (alpha-L-Ara4N-phosphoundecaprenol) from the cytoplasmic to the periplasmic side of the inner membrane. In Escherichia coli O157:H7, this protein is Probable 4-amino-4-deoxy-L-arabinose-phosphoundecaprenol flippase subunit ArnE.